The following is a 39-amino-acid chain: Cytochrome b6-f complex subunit 5 (39 aa).

A helical membrane pass occupies residues 5-25; that stretch reads LLCGIVLGLVPVTLLGLFVSA.

Belongs to the PetG family. The 4 large subunits of the cytochrome b6-f complex are cytochrome b6, subunit IV (17 kDa polypeptide, PetD), cytochrome f and the Rieske protein, while the 4 small subunits are PetG, PetL, PetM and PetN. The complex functions as a dimer.

The protein resides in the cellular thylakoid membrane. Component of the cytochrome b6-f complex, which mediates electron transfer between photosystem II (PSII) and photosystem I (PSI), cyclic electron flow around PSI, and state transitions. PetG is required for either the stability or assembly of the cytochrome b6-f complex. This Prochlorococcus marinus (strain NATL1A) protein is Cytochrome b6-f complex subunit 5.